Here is a 207-residue protein sequence, read N- to C-terminus: MGKIWSKSSLVGWPEIRERIRRQTPEPAVGVGAVSQDLANRGAITTSNTKDNNQTVAWLEAQEEZEVGFPVRPQVPLRPMTYKAAFDLSFFLKEKGGLEGLVWSRKRQEILDLWVYHTQGFFPDWQNYTPGPGVRYPLCFGWCFKLVPLSEEAVEEANEGDNNALLHPICQHGVDDDHKQVLVWRFDSSLARRHVAKELHPDFYKNC.

Residue Gly2 is the site of N-myristoyl glycine; by host attachment. At Ser6 the chain carries Phosphoserine; by host. The acidic; interacts with host PACS1 and PACS2; stabilizes the interaction of NEF/MHC-I with host AP1M1; necessary for MHC-I internalization stretch occupies residues 63–66 (EEZE). The interval 70–79 (PVRPQVPLRP) is SH3-binding; interaction with Src family tyrosine kinases. Positions 73-76 (PQVP) match the PxxP; stabilizes the interaction of NEF/MHC-I with host AP1M1; necessary for MHC-I internalization motif. A mediates dimerization, Nef-PTE1 interaction region spans residues 109–125 (EILDLWVYHTQGFFPDW). Positions 149–181 (LSEEAVEEANEGDNNALLHPICQHGVDDDHKQV) are binding to ATP6V1H. The short motif at 165 to 166 (LL) is the Dileucine internalization motif; necessary for CD4 internalization element. A Diacidic; necessary for CD4 internalization motif is present at residues 175–176 (DD).

This sequence belongs to the lentivirus primate group Nef protein family. As to quaternary structure, monomer; cytosolic form. Homodimer; membrane bound form. Interacts with Nef associated p21-activated kinase (PAK2); this interaction activates PAK2. Associates with the Nef-MHC-I-AP1 complex; this complex is required for MHC-I internalization. Interacts (via C-terminus) with host PI3-kinase. Interacts with host PACS1; this interaction seems to be weak. Interacts with host PACS2. Interacts with host LCK and MAPK3; these interactions inhibit the kinase activity of the latter. Interacts with host ATP6V1H; this interaction may play a role in CD4 endocytosis. Associates with the CD4-Nef-AP2 complex; this complex is required for CD4 internalization. Interacts with host AP2 subunit alpha and AP2 subunit sigma2. Interacts with TCR-zeta chain; this interaction up-regulates the Fas ligand (FasL) surface expression. Interacts with host HCK, LYN, and SRC; these interactions activate the Src family kinases. Interacts with MAP3K5; this interaction inhibits the Fas and TNFR-mediated death signals. Interacts with beta-COP and PTE1. Interacts with human RACK1; this increases Nef phosphorylation by PKC. Interacts with TP53; this interaction decreases the half-life of TP53, protecting the infected cell against p53-mediated apoptosis. Post-translationally, the virion-associated Nef proteins are cleaved by the viral protease to release the soluble C-terminal core protein. Nef is probably cleaved concomitantly with viral structural proteins on maturation of virus particles. In terms of processing, myristoylated. Phosphorylated on serine residues, probably by host PKCdelta and theta.

Its subcellular location is the host cell membrane. The protein resides in the virion. It is found in the secreted. The protein localises to the host Golgi apparatus membrane. Functionally, factor of infectivity and pathogenicity, required for optimal virus replication. Alters numerous pathways of T-lymphocyte function and down-regulates immunity surface molecules in order to evade host defense and increase viral infectivity. Alters the functionality of other immunity cells, like dendritic cells, monocytes/macrophages and NK cells. In terms of biological role, in infected CD4(+) T-lymphocytes, down-regulates the surface MHC-I, mature MHC-II, CD4, CD28, CCR5 and CXCR4 molecules. Mediates internalization and degradation of host CD4 through the interaction of with the cytoplasmic tail of CD4, the recruitment of AP-2 (clathrin adapter protein complex 2), internalization through clathrin coated pits, and subsequent transport to endosomes and lysosomes for degradation. Diverts host MHC-I molecules to the trans-Golgi network-associated endosomal compartments by an endocytic pathway to finally target them for degradation. MHC-I down-regulation may involve AP-1 (clathrin adapter protein complex 1) or possibly Src family kinase-ZAP70/Syk-PI3K cascade recruited by PACS2. In consequence infected cells are masked for immune recognition by cytotoxic T-lymphocytes. Decreasing the number of immune receptors also prevents reinfection by more HIV particles (superinfection). Down-regulates host SERINC3 and SERINC5 thereby excluding these proteins from the viral particles. Virion infectivity is drastically higher when SERINC3 or SERINC5 are excluded from the viral envelope, because these host antiviral proteins impair the membrane fusion event necessary for subsequent virion penetration. Its function is as follows. Bypasses host T-cell signaling by inducing a transcriptional program nearly identical to that of anti-CD3 cell activation. Interaction with TCR-zeta chain up-regulates the Fas ligand (FasL). Increasing surface FasL molecules and decreasing surface MHC-I molecules on infected CD4(+) cells send attacking cytotoxic CD8+ T-lymphocytes into apoptosis. Plays a role in optimizing the host cell environment for viral replication without causing cell death by apoptosis. Protects the infected cells from apoptosis in order to keep them alive until the next virus generation is ready to strike. Inhibits the Fas and TNFR-mediated death signals by blocking MAP3K5/ASK1. Decreases the half-life of TP53, protecting the infected cell against p53-mediated apoptosis. Inhibits the apoptotic signals regulated by the Bcl-2 family proteins through the formation of a Nef/PI3-kinase/PAK2 complex that leads to activation of PAK2 and induces phosphorylation of host BAD. Functionally, extracellular Nef protein targets CD4(+) T-lymphocytes for apoptosis by interacting with CXCR4 surface receptors. This Homo sapiens (Human) protein is Protein Nef.